The following is a 198-amino-acid chain: RNA-free ribonuclease P (198 aa).

It belongs to the HARP family.

It catalyses the reaction Endonucleolytic cleavage of RNA, removing 5'-extranucleotides from tRNA precursor.. RNA-free RNase P that catalyzes the removal of the 5'-leader sequence from pre-tRNA to produce the mature 5'-terminus. This is RNA-free ribonuclease P from Nitrosococcus oceani (strain ATCC 19707 / BCRC 17464 / JCM 30415 / NCIMB 11848 / C-107).